A 567-amino-acid chain; its full sequence is Urease subunit alpha (567 aa).

Positions 129–567 (GGIDAHIHFI…LPLAQLYCLF (439 aa)) constitute a Urease domain. The Ni(2+) site is built by histidine 134, histidine 136, and lysine 217. Residue lysine 217 is modified to N6-carboxylysine. Histidine 219 contributes to the substrate binding site. 2 residues coordinate Ni(2+): histidine 246 and histidine 272. Histidine 320 acts as the Proton donor in catalysis. Aspartate 360 lines the Ni(2+) pocket.

The protein belongs to the metallo-dependent hydrolases superfamily. Urease alpha subunit family. In terms of assembly, heterotrimer of UreA (gamma), UreB (beta) and UreC (alpha) subunits. Three heterotrimers associate to form the active enzyme. It depends on Ni cation as a cofactor. Post-translationally, carboxylation allows a single lysine to coordinate two nickel ions.

It is found in the cytoplasm. The catalysed reaction is urea + 2 H2O + H(+) = hydrogencarbonate + 2 NH4(+). It participates in nitrogen metabolism; urea degradation; CO(2) and NH(3) from urea (urease route): step 1/1. The sequence is that of Urease subunit alpha from Alteromonas mediterranea (strain DSM 17117 / CIP 110805 / LMG 28347 / Deep ecotype).